Here is a 262-residue protein sequence, read N- to C-terminus: Acyl-[acyl-carrier-protein]--UDP-N-acetylglucosamine O-acyltransferase (262 aa).

The protein belongs to the transferase hexapeptide repeat family. LpxA subfamily. As to quaternary structure, homotrimer.

It localises to the cytoplasm. The catalysed reaction is a (3R)-hydroxyacyl-[ACP] + UDP-N-acetyl-alpha-D-glucosamine = a UDP-3-O-[(3R)-3-hydroxyacyl]-N-acetyl-alpha-D-glucosamine + holo-[ACP]. It participates in glycolipid biosynthesis; lipid IV(A) biosynthesis; lipid IV(A) from (3R)-3-hydroxytetradecanoyl-[acyl-carrier-protein] and UDP-N-acetyl-alpha-D-glucosamine: step 1/6. Its function is as follows. Involved in the biosynthesis of lipid A, a phosphorylated glycolipid that anchors the lipopolysaccharide to the outer membrane of the cell. The protein is Acyl-[acyl-carrier-protein]--UDP-N-acetylglucosamine O-acyltransferase of Vibrio parahaemolyticus serotype O3:K6 (strain RIMD 2210633).